A 373-amino-acid polypeptide reads, in one-letter code: NADH-quinone oxidoreductase subunit D (373 aa).

It belongs to the complex I 49 kDa subunit family. As to quaternary structure, NDH-1 is composed of 14 different subunits. Subunits NuoB, C, D, E, F, and G constitute the peripheral sector of the complex.

It is found in the cell inner membrane. The catalysed reaction is a quinone + NADH + 5 H(+)(in) = a quinol + NAD(+) + 4 H(+)(out). NDH-1 shuttles electrons from NADH, via FMN and iron-sulfur (Fe-S) centers, to quinones in the respiratory chain. The immediate electron acceptor for the enzyme in this species is believed to be ubiquinone. Couples the redox reaction to proton translocation (for every two electrons transferred, four hydrogen ions are translocated across the cytoplasmic membrane), and thus conserves the redox energy in a proton gradient. The polypeptide is NADH-quinone oxidoreductase subunit D (Syntrophobacter fumaroxidans (strain DSM 10017 / MPOB)).